The chain runs to 492 residues: Nuclear hormone receptor family member nhr-4 (492 aa).

The segment at residues 47-122 is a DNA-binding region (nuclear receptor); it reads RLICDVCGDV…VGMNPDSVQN (76 aa). 2 NR C4-type zinc fingers span residues 50 to 70 and 86 to 110; these read CDVCGDVAFGKHYGINACNGC and CRFGGDCPVVKEHRNVCRSCRLKKC. The disordered stretch occupies residues 121–143; it reads QNERDRNAKNGGMGGPMSSPTQS. The region spanning 215-481 is the NR LBD domain; it reads MDFSIHSAVL…ELIQATHKTT (267 aa).

Belongs to the nuclear hormone receptor family.

It localises to the nucleus. In terms of biological role, orphan nuclear receptor. The protein is Nuclear hormone receptor family member nhr-4 (nhr-4) of Caenorhabditis elegans.